A 509-amino-acid polypeptide reads, in one-letter code: Photosystem II CP47 reaction center protein (509 aa).

6 consecutive transmembrane segments (helical) span residues 21–36 (AVHL…WAGS), 101–115 (IVLS…IWHW), 140–156 (GIHL…FGAF), 203–218 (IAAG…FHLT), 237–252 (VLSS…AFVT), and 457–472 (NFAL…HGSR).

It belongs to the PsbB/PsbC family. PsbB subfamily. PSII is composed of 1 copy each of membrane proteins PsbA, PsbB, PsbC, PsbD, PsbE, PsbF, PsbH, PsbI, PsbJ, PsbK, PsbL, PsbM, PsbT, PsbX, PsbY, PsbZ, Psb30/Ycf12, at least 3 peripheral proteins of the oxygen-evolving complex and a large number of cofactors. It forms dimeric complexes. Binds multiple chlorophylls. PSII binds additional chlorophylls, carotenoids and specific lipids. serves as cofactor.

The protein localises to the plastid. It is found in the chloroplast thylakoid membrane. Its function is as follows. One of the components of the core complex of photosystem II (PSII). It binds chlorophyll and helps catalyze the primary light-induced photochemical processes of PSII. PSII is a light-driven water:plastoquinone oxidoreductase, using light energy to abstract electrons from H(2)O, generating O(2) and a proton gradient subsequently used for ATP formation. This is Photosystem II CP47 reaction center protein from Pyropia yezoensis (Susabi-nori).